The following is a 364-amino-acid chain: Aminomethyltransferase (364 aa).

This sequence belongs to the GcvT family. The glycine cleavage system is composed of four proteins: P, T, L and H.

It catalyses the reaction N(6)-[(R)-S(8)-aminomethyldihydrolipoyl]-L-lysyl-[protein] + (6S)-5,6,7,8-tetrahydrofolate = N(6)-[(R)-dihydrolipoyl]-L-lysyl-[protein] + (6R)-5,10-methylene-5,6,7,8-tetrahydrofolate + NH4(+). The glycine cleavage system catalyzes the degradation of glycine. The chain is Aminomethyltransferase from Shewanella sediminis (strain HAW-EB3).